Reading from the N-terminus, the 321-residue chain is MDRGRCANMLKSLQRTLAKCQKSPSTKHWQCFKRNFTSIRATKYPGRSNSTFHYWPWFAASTLLATSLYYRDRPVQNDDKTDAFPSHTESIQVDSSVSDFPLTITALNFPVSTTFKLLGYGQRHVTFLRFKVYALGLYLAENDENLVSDTLNETYLHKYFLDVDDSKTPKENLARLLKRDDSKSVMMIDDLLDSGMRMLAKITPVRNTDFKHLKEGLVKTISKHPDVANNKDTLAKGLSELNDAFSRKGSVRKNDDLIIELLANGALQFSYHDSKNNEFEVMGVVNNQLVGKFLFSQYLCGEKSPSPQAKKTAIDKLITLL.

The N-terminal 72 residues, 1–72, are a transit peptide targeting the mitochondrion; that stretch reads MDRGRCANML…LLATSLYYRD (72 aa).

This sequence belongs to the AIM18/AIM46 family.

Its subcellular location is the mitochondrion. The polypeptide is Altered inheritance of mitochondria protein 18, mitochondrial (AIM18) (Saccharomyces cerevisiae (strain YJM789) (Baker's yeast)).